A 93-amino-acid polypeptide reads, in one-letter code: Protein S100-A8 (93 aa).

EF-hand domains lie at 12 to 47 and 46 to 81; these read IIDVYHKYSLIKGNFHAVYRDDLKKLLETECPQYIR and IRKKGADVWFKELDINTDGAVNFQEFLILVIKMGVA. Residues His17 and His27 each contribute to the Zn(2+) site. A Ca(2+)-binding site is contributed by Asp33. Cys42 carries the post-translational modification S-nitrosocysteine. Asp59, Asn61, Asp63, and Glu70 together coordinate Ca(2+). 2 residues coordinate Zn(2+): His83 and His87.

This sequence belongs to the S-100 family. As to quaternary structure, homodimer. Preferentially exists as a heterodimer or heterotetramer with S100A9 known as calprotectin (S100A8/A9). S100A8 interacts with AGER, ATP2A2 and with the heterodimeric complex formed by TLR4 and LY96. Interacts with GAPDH. Calprotectin (S100A8/9) interacts with CEACAM3 and tubulin filaments in a calcium-dependent manner. Heterotetrameric calprotectin (S100A8/A9) interacts with ANXA6 and associates with tubulin filaments in activated monocytes. S100A8 and calprotectin (S100A8/9) interact with NCF2/P67PHOX, RAC1 and RAC2. Calprotectin (S100A8/9) interacts with CYBA and CYBB. Calprotectin (S100A8/9) interacts with NOS2 to form the iNOS-S100A8/A9 transnitrosylase complex; induced by LDL(ox). Calprotectin (S100A8/9) interacts with CD69. Calprotectin (S100A8/9) is predominantly expressed in myeloid cells. Except for inflammatory conditions, the expression is restricted to a specific stage of myeloid differentiation since both proteins are expressed in circulating neutrophils and monocytes but are absent in normal tissue macrophages and lymphocytes. Under chronic inflammatory conditions, such as psoriasis and malignant disorders, also expressed in the epidermis. Found in high concentrations at local sites of inflammation or in the serum of patients with inflammatory diseases such as rheumatoid, cystic fibrosis, inflammatory bowel disease, Crohn's disease, giant cell arteritis, cystic fibrosis, Sjogren's syndrome, systemic lupus erythematosus, and progressive systemic sclerosis. Involved in the formation and deposition of amyloids in the aging prostate known as corpora amylacea inclusions. Strongly up-regulated in many tumors, including gastric, esophageal, colon, pancreatic, bladder, ovarian, thyroid, breast and skin cancers.

It is found in the secreted. The protein resides in the cytoplasm. The protein localises to the cytoskeleton. It localises to the cell membrane. Calprotectin (S100A8/A9) activity on TLR4 signaling is inhibited by paquinimod. In terms of biological role, S100A8 is a calcium- and zinc-binding protein which plays a prominent role in the regulation of inflammatory processes and immune response. It can induce neutrophil chemotaxis and adhesion. Predominantly found as calprotectin (S100A8/A9) which has a wide plethora of intra- and extracellular functions. The intracellular functions include: facilitating leukocyte arachidonic acid trafficking and metabolism, modulation of the tubulin-dependent cytoskeleton during migration of phagocytes and activation of the neutrophilic NADPH-oxidase. Also participates in regulatory T-cell differentiation together with CD69. Activates NADPH-oxidase by facilitating the enzyme complex assembly at the cell membrane, transferring arachidonic acid, an essential cofactor, to the enzyme complex and S100A8 contributes to the enzyme assembly by directly binding to NCF2/P67PHOX. The extracellular functions involve pro-inflammatory, antimicrobial, oxidant-scavenging and apoptosis-inducing activities. Its pro-inflammatory activity includes recruitment of leukocytes, promotion of cytokine and chemokine production, and regulation of leukocyte adhesion and migration. Acts as an alarmin or a danger associated molecular pattern (DAMP) molecule and stimulates innate immune cells via binding to pattern recognition receptors such as Toll-like receptor 4 (TLR4) and receptor for advanced glycation endproducts (AGER). Binding to TLR4 and AGER activates the MAP-kinase and NF-kappa-B signaling pathways resulting in the amplification of the pro-inflammatory cascade. Has antimicrobial activity towards bacteria and fungi and exerts its antimicrobial activity probably via chelation of Zn(2+) which is essential for microbial growth. Can induce cell death via autophagy and apoptosis and this occurs through the cross-talk of mitochondria and lysosomes via reactive oxygen species (ROS) and the process involves BNIP3. Can regulate neutrophil number and apoptosis by an anti-apoptotic effect; regulates cell survival via ITGAM/ITGB and TLR4 and a signaling mechanism involving MEK-ERK. Its role as an oxidant scavenger has a protective role in preventing exaggerated tissue damage by scavenging oxidants. Can act as a potent amplifier of inflammation in autoimmunity as well as in cancer development and tumor spread. The iNOS-S100A8/A9 transnitrosylase complex directs selective inflammatory stimulus-dependent S-nitrosylation of GAPDH and probably multiple targets such as ANXA5, EZR, MSN and VIM by recognizing a [IL]-x-C-x-x-[DE] motif; S100A8 seems to contribute to S-nitrosylation site selectivity. Its function is as follows. (Microbial infection) Upon infection by human coronavirus SARS-CoV-2, may induce expansion of aberrant immature neutrophils in a TLR4-dependent manner. In Homo sapiens (Human), this protein is Protein S100-A8.